Here is a 95-residue protein sequence, read N- to C-terminus: Nucleoid-associated protein MARTH_orf159 (95 aa).

Belongs to the YbaB/EbfC family. In terms of assembly, homodimer.

It is found in the cytoplasm. The protein resides in the nucleoid. Binds to DNA and alters its conformation. May be involved in regulation of gene expression, nucleoid organization and DNA protection. This chain is Nucleoid-associated protein MARTH_orf159, found in Metamycoplasma arthritidis (strain 158L3-1) (Mycoplasma arthritidis).